The chain runs to 148 residues: MGLEKSLILLPLLVLVFGWVQSSLGKETSAQKFERHDMDSTGSSSSATYCNQMMKRRNMTQGYCKPVNTFVHEPQTAVHAVCSQKNVTCKNGNSNCYKSHSALHITDCRLKGNSKYPNCDYQTNQLQKHIIIACEGNPFVPVHFDASV.

An N-terminal signal peptide occupies residues 1-25; sequence MGLEKSLILLPLLVLVFGWVQSSLG. Residues lysine 32 and arginine 35 each coordinate substrate. Catalysis depends on histidine 36, which acts as the Proton acceptor. 4 disulfide bridges follow: cysteine 50/cysteine 108, cysteine 64/cysteine 119, cysteine 82/cysteine 134, and cysteine 89/cysteine 96. Residue asparagine 58 is glycosylated (N-linked (GlcNAc...) asparagine). Residue 65–69 participates in substrate binding; sequence KPVNT. N-linked (GlcNAc...) asparagine glycosylation is present at asparagine 86. Substrate-binding residues include lysine 90 and arginine 109. Histidine 143 (proton donor) is an active-site residue.

This sequence belongs to the pancreatic ribonuclease family. As to quaternary structure, monomer. Interacts with and forms tight 1:1 complexes with RNH1. Dimerization of two such complexes may occur. Interaction with RNH1 inhibits this protein. As to expression, pancreas.

It is found in the secreted. It catalyses the reaction an [RNA] containing cytidine + H2O = an [RNA]-3'-cytidine-3'-phosphate + a 5'-hydroxy-ribonucleotide-3'-[RNA].. It carries out the reaction an [RNA] containing uridine + H2O = an [RNA]-3'-uridine-3'-phosphate + a 5'-hydroxy-ribonucleotide-3'-[RNA].. Its function is as follows. Endonuclease that catalyzes the cleavage of RNA on the 3' side of pyrimidine nucleotides. Acts on single-stranded and double-stranded RNA. In Chionomys nivalis (European snow vole), this protein is Ribonuclease pancreatic (RNASE1).